The chain runs to 396 residues: uncharacterized protein (396 aa).

11 helical membrane-spanning segments follow: residues 7 to 27 (SDDVWVLWGFIAVWAAVSIGL), 36 to 56 (AVSGAIIALAGAMVFTNVGVL), 62 to 82 (VYDTVWSYVVPLAIPLLLFQI), 94 to 114 (LLFIFLISSVGTVLGSILAFF), 159 to 179 (VVADNFMMALLFFILISIPAL), 218 to 238 (IAFNAGAAFALVAVSMKVSGY), 250 to 270 (GTLGDQYLVLTSLTVLIIFLF), 285 to 305 (TFLIYLFFVVIGIPADLRLIV), 310 to 330 (LILLFVFIIAISNLAVSLAAG), 340 to 360 (ILLAVNATVGGPTTAAAMAIA), and 367 to 387 (VAPIMLVGTLGYLIGNYVGTF).

The protein resides in the cell membrane. This is an uncharacterized protein from Bacillus subtilis (strain 168).